Here is a 194-residue protein sequence, read N- to C-terminus: Large ribosomal subunit protein bL9 (194 aa).

Positions Gln148 to Ala194 are disordered.

The protein belongs to the bacterial ribosomal protein bL9 family.

Binds to the 23S rRNA. The protein is Large ribosomal subunit protein bL9 of Caulobacter vibrioides (strain ATCC 19089 / CIP 103742 / CB 15) (Caulobacter crescentus).